The primary structure comprises 172 residues: 3-hydroxydecanoyl-[acyl-carrier-protein] dehydratase (172 aa).

His70 is a catalytic residue.

It belongs to the thioester dehydratase family. FabA subfamily. As to quaternary structure, homodimer.

The protein resides in the cytoplasm. The catalysed reaction is a (3R)-hydroxyacyl-[ACP] = a (2E)-enoyl-[ACP] + H2O. It catalyses the reaction (3R)-hydroxydecanoyl-[ACP] = (2E)-decenoyl-[ACP] + H2O. The enzyme catalyses (2E)-decenoyl-[ACP] = (3Z)-decenoyl-[ACP]. It participates in lipid metabolism; fatty acid biosynthesis. Its function is as follows. Necessary for the introduction of cis unsaturation into fatty acids. Catalyzes the dehydration of (3R)-3-hydroxydecanoyl-ACP to E-(2)-decenoyl-ACP and then its isomerization to Z-(3)-decenoyl-ACP. Can catalyze the dehydratase reaction for beta-hydroxyacyl-ACPs with saturated chain lengths up to 16:0, being most active on intermediate chain length. This chain is 3-hydroxydecanoyl-[acyl-carrier-protein] dehydratase, found in Xylella fastidiosa (strain M12).